Here is a 211-residue protein sequence, read N- to C-terminus: ADESRDAAGEARPAPAPVRRRSSANYRAYATEPHAKSKKKISASRKLQLKTLMLQIAKQELEREAEERRGEKGRALSTRCQPLELAGLGFAELQDLCRQLHARVDKVDEERYDVEAKVTKNITEIADLTQKIFDLRGKFKRPTLRLRVRISADAMMQALLGTRAKETLDLRAHLKQVKKEDTEKENREVGDWRKNIDLLSGMEGRKKKFEG.

Residue A1 is modified to N-acetylalanine. The interval 1–43 (ADESRDAAGEARPAPAPVRRRSSANYRAYATEPHAKSKKKISA) is disordered. S4 is subject to Phosphoserine. At S22 the chain carries Phosphoserine; by PHK, PKA and PKD/PRKD1. S23 is modified (phosphoserine; by PKA and PKD/PRKD1). Y26 carries the phosphotyrosine modification. T31 bears the Phosphothreonine; by STK4/MST1 mark. The segment at 32–79 (EPHAKSKKKISASRKLQLKTLMLQIAKQELEREAEERRGEKGRALSTR) is involved in binding TNC. 2 positions are modified to phosphoserine; by PKC/PRKCE: S42 and S44. At T51 the chain carries Phosphothreonine; by STK4/MST1. S77 carries the post-translational modification Phosphoserine. At T78 the chain carries Phosphothreonine. Phosphothreonine; by STK4/MST1 occurs at positions 129 and 143. The involved in binding TNC and actin stretch occupies residues 129–150 (TQKIFDLRGKFKRPTLRLRVRI). Residue S151 is modified to Phosphoserine; by PAK3. T182 carries the post-translational modification Phosphothreonine. S200 is modified (phosphoserine).

This sequence belongs to the troponin I family. In terms of assembly, interacts with TRIM63. Binds to actin and tropomyosin. Interacts with STK4/MST1. In terms of processing, phosphorylated at Ser-22 and Ser-23 by PRKD1; phosphorylation reduces myofilament calcium sensitivity. Phosphorylated preferentially at Thr-31. Phosphorylation by STK4/MST1 alters its binding affinity to TNNC1 (cardiac Tn-C) and TNNT2 (cardiac Tn-T). Phosphorylated at Ser-42 and Ser-44 by PRKCE; phosphorylation increases myocardium contractile dysfunction. Ser-22 is one of three sites in the region of residues 1-48 that are phosphorylated by phosphorylase kinase.

Its function is as follows. Troponin I is the inhibitory subunit of troponin, the thin filament regulatory complex which confers calcium-sensitivity to striated muscle actomyosin ATPase activity. The polypeptide is Troponin I, cardiac muscle (TNNI3) (Oryctolagus cuniculus (Rabbit)).